We begin with the raw amino-acid sequence, 254 residues long: Large ribosomal subunit protein uL2 (254 aa).

Belongs to the universal ribosomal protein uL2 family.

The polypeptide is Large ribosomal subunit protein uL2 (RPL2) (Candida glabrata (strain ATCC 2001 / BCRC 20586 / JCM 3761 / NBRC 0622 / NRRL Y-65 / CBS 138) (Yeast)).